Consider the following 1027-residue polypeptide: Presequence protease, mitochondrial (1027 aa).

The transit peptide at 1 to 22 (MIRQCRAGLRLCRALYQTSYRW) directs the protein to the mitochondrion. Residue H98 participates in Zn(2+) binding. E101 (proton acceptor) is an active-site residue. Zn(2+)-binding residues include H102 and E199. A disulfide bridge links C113 with C550. The disordered stretch occupies residues 800-829 (KKERKSIRPHVVEKSSSPSSSGSEISRRAT). The span at 814 to 823 (SSSPSSSGSE) shows a compositional bias: low complexity.

The protein belongs to the peptidase M16 family. PreP subfamily. Monomer and homodimer; homodimerization is induced by binding of the substrate. Requires Zn(2+) as cofactor. Post-translationally, a disulfide bond locks the enzyme in the closed conformation preventing substrate entry into the catalytic chamber.

The protein localises to the mitochondrion matrix. With respect to regulation, mainly exists in a closed and catalytically competent conformation but a closed-to-open switch allows substrate entry into the catalytic chamber. Substrate binding induces closure and dimerization. A disulfide bond may lock the enzyme in a closed conformation preventing substrate entry into the catalytic chamber, participating in redox regulation of the enzyme. Inhibited by metal-chelating agents. Inhibited by nickel and zinc excess, and slightly activated by manganese. Its function is as follows. Metalloendopeptidase of the mitochondrial matrix that functions in peptide cleavage and degradation rather than in protein processing. Has an ATP-independent activity. Specifically cleaves peptides in the range of 5 to 65 residues. Shows a preference for cleavage after small polar residues and before basic residues, but without any positional preference. Degrades the transit peptides of mitochondrial proteins after their cleavage. Also degrades other unstructured peptides. The chain is Presequence protease, mitochondrial (pitrm1) from Xenopus tropicalis (Western clawed frog).